A 313-amino-acid polypeptide reads, in one-letter code: Intelectin-like protein (313 aa).

Positions 33-251 constitute a Fibrinogen C-terminal domain; the sequence is TSCCSQTSPG…NNEKAPMALC (219 aa). Ca(2+)-binding residues include His86, Glu87, Asn89, Gly92, Gly97, Asp98, and Asp133. 3 disulfide bridges follow: Cys94/Cys280, Cys199/Cys259, and Cys251/Cys265. Residues Asn260, Glu262, Glu274, and Asp282 each contribute to the Ca(2+) site. A carbohydrate contacts are provided by residues 262-263 and Glu274; that span reads EH.

Monomer, homodimer, homotrimer and homotetramer. Mostly monomeric or dimeric.

Its subcellular location is the secreted. Functionally, binds mannan, mannose and, to a lesser degree, D-lactose, N-acetylgalactosamine, N-acetylglucosamine and beta-D-glucose. The polypeptide is Intelectin-like protein (Alligator mississippiensis (American alligator)).